Consider the following 466-residue polypeptide: 3-isopropylmalate dehydratase large subunit (466 aa).

Positions 347, 407, and 410 each coordinate [4Fe-4S] cluster.

This sequence belongs to the aconitase/IPM isomerase family. LeuC type 1 subfamily. As to quaternary structure, heterodimer of LeuC and LeuD. [4Fe-4S] cluster is required as a cofactor.

It catalyses the reaction (2R,3S)-3-isopropylmalate = (2S)-2-isopropylmalate. It functions in the pathway amino-acid biosynthesis; L-leucine biosynthesis; L-leucine from 3-methyl-2-oxobutanoate: step 2/4. Its function is as follows. Catalyzes the isomerization between 2-isopropylmalate and 3-isopropylmalate, via the formation of 2-isopropylmaleate. The sequence is that of 3-isopropylmalate dehydratase large subunit from Buchnera aphidicola subsp. Thelaxes suberi.